The following is a 960-amino-acid chain: Angiomotin-like protein 1 (960 aa).

Positions 196–248 (SQFFRGQQPPPPPPQQQPGAVGHSYYMAGGASQKARTEGRPTVSRANSGQAHK) are disordered. A phosphoserine mark is found at Ser243, Ser271, and Ser297. Residues 261-281 (RSLSERIMQLSLERNGAKQHL) are a coiled coil. Disordered regions lie at residues 277-317 (AKQH…EYPF), 381-407 (LPFP…LHSV), and 413-432 (PPMA…SQQL). Residues 388–401 (QQHSPVSSQNSSVS) show a composition bias toward low complexity. 2 coiled-coil regions span residues 440 to 641 (VERA…WLER) and 667 to 697 (ALME…VEES). Ser722 bears the Phosphoserine mark. Residues 731-761 (SLEAHIWQEEEEVVQATRRCQDMEYTIKNLH) are a coiled coil. A disordered region spans residues 775-826 (QQRSRKDAGKTDSSSLRPARSVPSIAAATGTHSRQTSLTSSQLAEERKEEKT). Phosphoserine occurs at positions 795, 807, and 830. Residues 804–817 (GTHSRQTSLTSSQL) show a composition bias toward polar residues. Residues 842 to 952 (NDHASTPLLP…NLLHKPEFPD (111 aa)) are disordered. Low complexity predominate over residues 845–870 (ASTPLLPTPSAATLSPPTPGTSASSA). Positions 898–911 (PTRSRLSGTPSNSP) are enriched in polar residues. Ser904 bears the Phosphoserine mark. The residue at position 906 (Thr906) is a Phosphothreonine. A Phosphoserine modification is found at Ser910. Residues 957–960 (EVLI) carry the PDZ-binding motif.

Belongs to the angiomotin family. Post-translationally, polyubiquitinated by NEDD4, leading to proteasomal degradation.

It localises to the cell junction. The protein resides in the tight junction. In terms of biological role, inhibits the Wnt/beta-catenin signaling pathway, probably by recruiting CTNNB1 to recycling endosomes and hence preventing its translocation to the nucleus. This Bos taurus (Bovine) protein is Angiomotin-like protein 1 (AMOTL1).